A 241-amino-acid chain; its full sequence is Beta-nerve growth factor (241 aa).

A signal peptide spans 1–18; sequence MSMLFYTLITAFLIGIQA. A propeptide spanning residues 19–121 is cleaved from the precursor; sequence ELHSESNVPA…PFNRTHRSKR (103 aa). N-linked (GlcNAc...) asparagine glycosylation is found at Asn-69, Asn-114, and Asn-166. Disulfide bonds link Cys-136/Cys-201, Cys-179/Cys-229, and Cys-189/Cys-231. The a 1-acyl-sn-glycero-3-phospho-(1D-myo-inositol) site is built by Tyr-173 and Lys-209. Lys-209 is an a 1-acyl-sn-glycero-3-phospho-L-serine binding site.

It belongs to the NGF-beta family. As to quaternary structure, homodimer. The homodimer interacts with a single NTRK1 chain. The homodimer interacts with a single NGFR chain. The NGF dimer interacts with a single SORCS2 chain (via extracellular domain). The NGF precursor (proNGF) binds to a receptor complex formed by SORT1 and NGFR, which leads to NGF endocytosis. Both mature NGF and the immature NGF precursor (proNGF) interact with SORCS2 and with the heterodimer formed by SORCS2 and NGFR (via extracellular domains). The NGF precursor (proNGF) has much higher affinity for SORCS2 than mature NGF. The NGF precursor (proNGF) has much higher affinity for SORT1 than mature NGF. Interacts with ADAM10 in a divalent cation-dependent manner. Interacts with SORCS3.

The protein localises to the secreted. The protein resides in the endosome lumen. Its function is as follows. Nerve growth factor is important for the development and maintenance of the sympathetic and sensory nervous systems. Extracellular ligand for the NTRK1 and NGFR receptors, activates cellular signaling cascades to regulate neuronal proliferation, differentiation and survival. The immature NGF precursor (proNGF) functions as a ligand for the heterodimeric receptor formed by SORCS2 and NGFR, and activates cellular signaling cascades that lead to inactivation of RAC1 and/or RAC2, reorganization of the actin cytoskeleton and neuronal growth cone collapse. In contrast to mature NGF, the precursor form (proNGF) promotes neuronal apoptosis (in vitro). Inhibits metalloproteinase-dependent proteolysis of platelet glycoprotein VI. Binds lysophosphatidylinositol and lysophosphatidylserine between the two chains of the homodimer. The lipid-bound form promotes histamine relase from mast cells, contrary to the lipid-free form. The protein is Beta-nerve growth factor (NGF) of Gorilla gorilla gorilla (Western lowland gorilla).